The chain runs to 228 residues: Homeobox-leucine zipper protein ATHB-53 (228 aa).

The disordered stretch occupies residues 36–62; it reads DGGEESKPVKRRRKRRSKGSSATNEED. A compositionally biased stretch (basic residues) spans 44–53; sequence VKRRRKRRSK. The homeobox DNA-binding region spans 68–127; that stretch reads GMLRKRKLTDEQVNMLEYSFGNEHKLESGRKEKIAGELGLDPRQVAVWFQNRRARWKNKK. The interval 128–156 is leucine-zipper; that stretch reads LEEEYAKLKNHHDNVVLGQCQLESQILKL.

This sequence belongs to the HD-ZIP homeobox family. Class I subfamily. Expressed in root meristem, late flowers and siliques.

The protein resides in the nucleus. Probable transcription factor that may play a regulatory role in auxin/cytokinin signaling during root development. In Arabidopsis thaliana (Mouse-ear cress), this protein is Homeobox-leucine zipper protein ATHB-53 (ATHB-53).